An 86-amino-acid chain; its full sequence is Large ribosomal subunit protein uL23 (86 aa).

It belongs to the universal ribosomal protein uL23 family. As to quaternary structure, part of the 50S ribosomal subunit. Contacts protein L29.

Binds to 23S rRNA. One of the proteins that surrounds the polypeptide exit tunnel on the outside of the ribosome. The chain is Large ribosomal subunit protein uL23 from Methanothermobacter thermautotrophicus (strain ATCC 29096 / DSM 1053 / JCM 10044 / NBRC 100330 / Delta H) (Methanobacterium thermoautotrophicum).